The chain runs to 359 residues: MDVRQVLHMKGGAGENSYAMNSFIQRQVISITKPITEAAITALYSGDTVTTRLAIADLGCSSGPNALFAVTELIKTVEELRKKMGRENSPEYQIFLNDLPGNDFNAIFRSLPIENDVDGVCFINGVPGSFYGRLFPRNTLHFIHSSYSLMWLSQVPIGIESNKGNIYMANTCPQSVLNAYYKQFQEDHALFLRCRAQEVVPGGRMVLTILGRRSEDRASTECCLIWQLLAMALNQMVSEGLIEEEKMDKFNIPQYTPSPTEVEAEILKEGSFLIDHIEASEIYWSSCTKDGDGGGSVEEEGYNVARCMRAVAEPLLLDHFGEAIIEDVFHRYKLLIIERMSKEKTKFINVIVSLIRKSD.

Residue Tyr18 participates in S-adenosyl-L-methionine binding. Substrate is bound by residues Tyr18, 21–25 (NSFIQ), and Gln25. Residues Gly59, 59–60 (GC), 59–61 (GCS), Asn65, 96–99 (LNDL), Asp98, 129–131 (SFY), and 146–148 (SYS) each bind S-adenosyl-L-methionine. Substrate contacts are provided by residues 147–151 (YSLMW) and Trp151. Mg(2+) contacts are provided by Asn162, Asp248, Phe250, and Asn251. Tyr255 contacts substrate.

The protein belongs to the methyltransferase superfamily. SABATH family.

The catalysed reaction is salicylate + S-adenosyl-L-methionine = methyl salicylate + S-adenosyl-L-homocysteine. In terms of biological role, catalyzes the methylation of the free carboxyl end of the plant hormone salicylic acid (SA). Converts SA to SA methyl ester (MSA). The volatile compound MSA is hypothesized to act as an airborne signal that triggers defense responses in uninfected plants. MSA is an important chemoattractant for moth pollinated flowering plants. This is Salicylate carboxymethyltransferase (SAMT) from Clarkia breweri (Fairy fans).